The primary structure comprises 68 residues: Peptide Smp13 (68 aa).

Residues 1 to 23 (MKTQFAIFLITLVLFQMFSQSDA) form the signal peptide. F36 is subject to Phenylalanine amide. Residues 37-68 (GKRGLGDHDDLDELFDGEISQADIDFLKEIMQ) constitute a propeptide that is removed on maturation.

This sequence belongs to the non-disulfide-bridged peptide (NDBP) superfamily. Short antimicrobial peptide (group 4) family. Expressed by the venom gland.

It is found in the secreted. In terms of biological role, peptide with unknown function. Does not show antimicrobial activity against the Gram-positive, and Gram-negative bacteria tested, as well as against the fungus C.albicans. This is Peptide Smp13 from Scorpio palmatus (Israeli golden scorpion).